Consider the following 101-residue polypeptide: Large ribosomal subunit protein bL25 (101 aa).

The protein belongs to the bacterial ribosomal protein bL25 family. In terms of assembly, part of the 50S ribosomal subunit; part of the 5S rRNA/L5/L18/L25 subcomplex. Contacts the 5S rRNA. Binds to the 5S rRNA independently of L5 and L18.

Its function is as follows. This is one of the proteins that binds to the 5S RNA in the ribosome where it forms part of the central protuberance. This Thermosynechococcus vestitus (strain NIES-2133 / IAM M-273 / BP-1) protein is Large ribosomal subunit protein bL25.